The sequence spans 208 residues: Large ribosomal subunit protein uL4 (208 aa).

The segment at 45-78 (RQGTAKSKERSEMSGSTRKLGRQKGSGGARRGDI) is disordered.

It belongs to the universal ribosomal protein uL4 family. In terms of assembly, part of the 50S ribosomal subunit.

Functionally, one of the primary rRNA binding proteins, this protein initially binds near the 5'-end of the 23S rRNA. It is important during the early stages of 50S assembly. It makes multiple contacts with different domains of the 23S rRNA in the assembled 50S subunit and ribosome. Forms part of the polypeptide exit tunnel. The polypeptide is Large ribosomal subunit protein uL4 (Azobacteroides pseudotrichonymphae genomovar. CFP2).